The sequence spans 145 residues: Prefoldin subunit alpha (145 aa).

Belongs to the prefoldin alpha subunit family. Heterohexamer of two alpha and four beta subunits.

The protein resides in the cytoplasm. In terms of biological role, molecular chaperone capable of stabilizing a range of proteins. Seems to fulfill an ATP-independent, HSP70-like function in archaeal de novo protein folding. The polypeptide is Prefoldin subunit alpha (Nitrosopumilus maritimus (strain SCM1)).